A 454-amino-acid chain; its full sequence is MQKPSIPKGMRDFSPVEMSRRNYIFDTIREVYELFGFNQIETPTMEMLSTLMGKYGEEGDRLLFKVLNSGDVLADFCAEELAEKNSLRFAAKACEKGLRYDLTVPFARYVVMHRNEINFPFKRYQIQPVWRADRPQKGRYREFYQCDGDVIGSDSLMNEVELIQIISEVFRRLGIRTRILLNNRKILSGIAEVVDEADRLTDITVAIDKLDKIGLDKVNDELRTKGFGEEAIERLRPFIEMKGDNREKLDRLKSALASSETGLKGIEELTYILDKVERVQLHSELMVDISLARGLSYYTGAILEVKALDAEMGSITGGGRYDNLTGIFGLEGMSGVGISFGADRIYDVMMQLDLFPAEKLTGTQLLFVNFSEEDADSLLPLIQKLREQGLRTELYPEPAKIKKQMSYANAANIPYVALVGENERAAGQVNLKNMLTGEQQMLPADAATIVAAIV.

The protein belongs to the class-II aminoacyl-tRNA synthetase family. In terms of assembly, homodimer.

The protein resides in the cytoplasm. It carries out the reaction tRNA(His) + L-histidine + ATP = L-histidyl-tRNA(His) + AMP + diphosphate + H(+). The polypeptide is Histidine--tRNA ligase (Porphyromonas gingivalis (strain ATCC BAA-308 / W83)).